Reading from the N-terminus, the 559-residue chain is DNA ligase (559 aa).

Glu247 contributes to the ATP binding site. Lys249 serves as the catalytic N6-AMP-lysine intermediate. Residues Arg254, Arg269, Glu299, Phe339, Arg414, and Lys420 each coordinate ATP.

This sequence belongs to the ATP-dependent DNA ligase family. It depends on Mg(2+) as a cofactor.

The enzyme catalyses ATP + (deoxyribonucleotide)n-3'-hydroxyl + 5'-phospho-(deoxyribonucleotide)m = (deoxyribonucleotide)n+m + AMP + diphosphate.. Its function is as follows. DNA ligase that seals nicks in double-stranded DNA during DNA replication, DNA recombination and DNA repair. The sequence is that of DNA ligase from Pyrococcus abyssi (strain GE5 / Orsay).